A 246-amino-acid chain; its full sequence is Receptor-transporting protein 4 (246 aa).

Residues 1–224 (MVVDFWTWEQ…EKLGPSRDPD (224 aa)) lie on the Cytoplasmic side of the membrane. A 3CxxC-type zinc finger spans residues 48–159 (RAFGWFRCSS…DTANCEACTL (112 aa)). A helical transmembrane segment spans residues 225–245 (PLNICVFILLLVFIVVKCFTS).

The protein belongs to the TMEM7 family. In terms of assembly, interacts with TASR16. Interacts with OPRD1 and OPRM1; the interaction promotes cell surface localization of the OPDR1-OPRM1 heterodimer. (Microbial infection) Interacts with influenza A virus protein NS1; this interaction sequesters NS1 from interacting with RIG-I/DDX58 to restore antiviral signaling. Expressed in circumvallate papillae and testis.

Its subcellular location is the membrane. The protein resides in the cytoplasm. Functionally, chaperone protein that facilitates the trafficking and functional cell surface expression of some G-protein coupled receptors (GPCRs). Promotes functional expression of the bitter taste receptor TAS2R16. Also promotes functional expression of the opioid receptor heterodimer OPRD1-OPRM1. In addition, acts as a potent IFN-inducible suppressor of pathogens including lyssavirus rabies, influenza A or yellow fever virus. Mechanistically, associates with the viral replicase, binds viral RNA, and thereby suppresses viral genome amplification that replicates at the endoplasmic reticulum. In addition, restores antiviral signaling by interacting with and sequestering influenza A virus protein NS1. This chain is Receptor-transporting protein 4 (RTP4), found in Homo sapiens (Human).